A 261-amino-acid polypeptide reads, in one-letter code: MAWFDDTYYFEQAQLRIAHITDCHLFSDKQGEYFGVNTAEHFTRALTDIAKQQPDALIFGGDLTQDHSFNSYLLFAELIHNSDLDCPVFWVPGNHDEIDQLNLISGGQIQRAKHIVAQGFELILINSKGNTPAGWVTPSHLEEIMACLVDSDNRHIAFCHHNPLPINGYLDKHMLENGPQLLNLLVNNGRVDALFHGHVHNDYQQQFRELDIYATPASSVQFTKHSATWQQEDKGAAYRMLHLNAEQQKVHIRTDVVWLNE.

Positions 22, 24, 62, 94, 160, 198, and 200 each coordinate Fe cation. Residues His-24, Asp-62, and 94 to 95 each bind AMP; that span reads NH. Residue His-200 coordinates AMP.

Belongs to the cyclic nucleotide phosphodiesterase class-III family. The cofactor is Fe(2+).

The sequence is that of Probable cyclic nucleotide phosphodiesterase PSM_A2567 from Pseudoalteromonas sp. (strain SM9913).